The sequence spans 66 residues: Cysteine proteinase inhibitor (66 aa).

A Secondary area of contact motif is present at residues 18–22 (QVVAG).

Belongs to the cystatin family. Phytocystatin subfamily. As to expression, in tubers of untreated plants. After ABA treatment or mechanical wounding is mostly accumulated in leaves, to a lesser extent in stems, but not in roots.

The sequence is that of Cysteine proteinase inhibitor (CYS-PIN) from Solanum tuberosum (Potato).